A 379-amino-acid chain; its full sequence is tRNA-specific 2-thiouridylase MnmA (379 aa).

Residues 23–30 and L49 contribute to the ATP site; that span reads AMSGGVDS. Residue C117 is the Nucleophile of the active site. An intrachain disulfide couples C117 to C214. ATP is bound at residue G141. Residues 163 to 165 are interaction with tRNA; it reads RDQ. C214 acts as the Cysteine persulfide intermediate in catalysis.

The protein belongs to the MnmA/TRMU family.

The protein localises to the cytoplasm. The catalysed reaction is S-sulfanyl-L-cysteinyl-[protein] + uridine(34) in tRNA + AH2 + ATP = 2-thiouridine(34) in tRNA + L-cysteinyl-[protein] + A + AMP + diphosphate + H(+). In terms of biological role, catalyzes the 2-thiolation of uridine at the wobble position (U34) of tRNA, leading to the formation of s(2)U34. The sequence is that of tRNA-specific 2-thiouridylase MnmA from Cereibacter sphaeroides (strain KD131 / KCTC 12085) (Rhodobacter sphaeroides).